A 229-amino-acid chain; its full sequence is E3 ubiquitin-protein ligase RNF114 (229 aa).

Residues 1 to 23 form a disordered region; that stretch reads MAAAQPESRDGAAQSAKPASETD. Residues 30–69 form an RING-type zinc finger; sequence CPVCLEVFEKPVQVPCGHVFCSACLQECLKPKKPVCGVCR. Zn(2+)-binding residues include Cys-92 and Cys-95. The C2HC RNF-type zinc finger occupies 92 to 111; sequence CHGCRKNFILSKIRAHVTSC. Lys-103 carries the post-translational modification N6-acetyllysine. Zn(2+)-binding residues include His-107 and Cys-111. At Lys-113 the chain carries N6-acetyllysine.

Interacts with XAF1, the interaction increases XAF1 stability and proapoptotic effects, and may regulate IFN signaling. Post-translationally, autoubiquitinated. Polyubiquitinated in the presence of E2 enzymes UBE2D1, UBE2D2 and UBE2D3, but only monoubiquitinated in the presence of UBE2E1.

The protein localises to the cytoplasm. It is found in the nucleus. It carries out the reaction S-ubiquitinyl-[E2 ubiquitin-conjugating enzyme]-L-cysteine + [acceptor protein]-L-lysine = [E2 ubiquitin-conjugating enzyme]-L-cysteine + N(6)-ubiquitinyl-[acceptor protein]-L-lysine.. It functions in the pathway protein modification; protein ubiquitination. Functionally, E3 ubiquitin-protein ligase that promotes the ubiquitination of various substrates. In turn, participates in the regulation of many biological processes including cell cycle, apoptosis, osteoclastogenesis as well as innate or adaptive immunity. Acts as negative regulator of NF-kappa-B-dependent transcription by promoting the ubiquitination and stabilization of the NF-kappa-B inhibitor TNFAIP3. May promote the ubiquitination of TRAF6 as well. Also acts as a negative regulator of T-cell activation. Inhibits cellular dsRNA responses and interferon production by targeting MAVS component for proteasomal degradation. Ubiquitinates the CDK inhibitor CDKN1A leading to its degradationand probably also CDKN1B and CDKN1C. This activity stimulates cell cycle G1-to-S phase transition and suppresses cellular senescence. May play a role in spermatogenesis. The protein is E3 ubiquitin-protein ligase RNF114 (Rnf114) of Mus musculus (Mouse).